We begin with the raw amino-acid sequence, 175 residues long: Vesicle-associated membrane protein-associated protein SCS22 (175 aa).

Residues 1–125 (MRIVPEKLVF…DDIVFKKIKI (125 aa)) enclose the MSP domain. The Cytoplasmic segment spans residues 1-154 (MRIVPEKLVF…RAPSAGNGQS (154 aa)). The disordered stretch occupies residues 133–152 (RKPSGNHDAESARAPSAGNG). A helical; Anchor for type IV membrane protein transmembrane segment spans residues 155-175 (LSSRALLIITVIALLVGWIYY).

This sequence belongs to the VAMP-associated protein (VAP) (TC 9.B.17) family.

It is found in the membrane. Targets proteins containing a FFAT motif to membranes. Involved in regulation of phospholipid metabolism. This is Vesicle-associated membrane protein-associated protein SCS22 (SCS22) from Saccharomyces cerevisiae (strain ATCC 204508 / S288c) (Baker's yeast).